A 900-amino-acid chain; its full sequence is Probable 2-oxoadipate dehydrogenase complex component E1 homolog (900 aa).

This sequence belongs to the alpha-ketoglutarate dehydrogenase family. Thiamine diphosphate serves as cofactor.

The protein resides in the mitochondrion. It carries out the reaction N(6)-[(R)-lipoyl]-L-lysyl-[protein] + 2-oxoadipate + H(+) = N(6)-[(R)-S(8)-glutaryldihydrolipoyl]-L-lysyl-[protein] + CO2. In terms of biological role, 2-oxoadipate dehydrogenase (E1a) component of the 2-oxoadipate dehydrogenase complex (OADHC). Participates in the first step, rate limiting for the overall conversion of 2-oxoadipate (alpha-ketoadipate) to glutaryl-CoA and CO(2) catalyzed by the whole OADHC. Catalyzes the irreversible decarboxylation of 2-oxoadipate via the thiamine diphosphate (ThDP) cofactor and subsequent transfer of the decarboxylated acyl intermediate on an oxidized dihydrolipoyl group that is covalently amidated to the E2 enzyme (dihydrolipoyllysine-residue succinyltransferase or DLST). The polypeptide is Probable 2-oxoadipate dehydrogenase complex component E1 homolog (odhA) (Dictyostelium discoideum (Social amoeba)).